Here is a 555-residue protein sequence, read N- to C-terminus: Probable terpene synthase 6 (555 aa).

Mg(2+) is bound by residues Asp309, Asp313, and Glu460. The DDXXD motif signature appears at 309-313 (DDTYD).

The protein belongs to the terpene synthase family. Mg(2+) is required as a cofactor.

Probable sesquiterpene synthase. The chain is Probable terpene synthase 6 (TPS6) from Ricinus communis (Castor bean).